Here is a 484-residue protein sequence, read N- to C-terminus: Adenylosuccinate lyase (484 aa).

The residue at position 2 (Ala2) is an N-acetylalanine. Substrate is bound by residues 20-21 (RY), 85-87 (RHD), and 111-112 (TS). Residue Lys147 is modified to N6-acetyllysine. The Proton donor/acceptor role is filled by His159. Gln241 contributes to the substrate binding site. Ser289 (proton donor/acceptor) is an active-site residue. The residue at position 295 (Lys295) is an N6-acetyllysine. The substrate site is built by Arg303, Arg329, Ser334, and Arg338. Residue Lys415 forms a Glycyl lysine isopeptide (Lys-Gly) (interchain with G-Cter in SUMO1) linkage.

Belongs to the lyase 1 family. Adenylosuccinate lyase subfamily. In terms of assembly, homotetramer. Residues from neighboring subunits contribute catalytic and substrate-binding residues to each active site. As to expression, ubiquitously expressed. Both isoforms are produced by all tissues. Isoform 2 is 10-fold less abundant than isoform 1.

The catalysed reaction is N(6)-(1,2-dicarboxyethyl)-AMP = fumarate + AMP. The enzyme catalyses (2S)-2-[5-amino-1-(5-phospho-beta-D-ribosyl)imidazole-4-carboxamido]succinate = 5-amino-1-(5-phospho-beta-D-ribosyl)imidazole-4-carboxamide + fumarate. Its pathway is purine metabolism; AMP biosynthesis via de novo pathway; AMP from IMP: step 2/2. The protein operates within purine metabolism; IMP biosynthesis via de novo pathway; 5-amino-1-(5-phospho-D-ribosyl)imidazole-4-carboxamide from 5-amino-1-(5-phospho-D-ribosyl)imidazole-4-carboxylate: step 2/2. The enzyme reaction kinetics indicate cooperativity between subunits. In terms of biological role, catalyzes two non-sequential steps in de novo AMP synthesis: converts (S)-2-(5-amino-1-(5-phospho-D-ribosyl)imidazole-4-carboxamido)succinate (SAICAR) to fumarate plus 5-amino-1-(5-phospho-D-ribosyl)imidazole-4-carboxamide, and thereby also contributes to de novo IMP synthesis, and converts succinyladenosine monophosphate (SAMP) to AMP and fumarate. The chain is Adenylosuccinate lyase (ADSL) from Homo sapiens (Human).